The sequence spans 131 residues: Runt-related transcription factor 2 (131 aa).

One can recognise a Runt domain in the interval 1–10 (MRVGVPPQIP). The interval 1–75 (MRVGVPPQIP…SSTRGTGLPV (75 aa)) is disordered. Arg11 is subject to Asymmetric dimethylarginine. Composition is skewed to polar residues over residues 13 to 36 (SLNSAPSPFNPQGQSQITDPRQAQ) and 43 to 70 (YDQSYPSYLSQMTSPSIHSTTPLSSTRG).

As to quaternary structure, heterodimer of an alpha and a beta subunit. The alpha subunit binds DNA as a monomer and through the Runt domain. DNA-binding is increased by heterodimerization. Interacts with XRCC6 (Ku70) and XRCC5 (Ku80). Interacts with CCNB1, KAT6A and KAT6B. Interacts with HIVEP3. Interacts with IFI204. Interaction with SATB2; the interaction results in enhanced DNA binding and transactivation by these transcription factors. Binds to HIPK3. Interacts with FOXO1 (via a C-terminal region); the interaction inhibits RUNX2 transcriptional activity towards BGLAP. This interaction is prevented on insulin or IGF1 stimulation as FOXO1 is exported from the nucleus. Interacts with FOXP3. Interacts with TMEM119. Interacts with OLFM2. Interacts with IPO7; the interaction inhibits RUNX2 nuclear translocation in osteoblasts. In terms of processing, phosphorylated; probably by MAP kinases (MAPK). Phosphorylation by HIPK3 is required for the SPEN/MINT and FGF2 transactivation during osteoblastic differentiation.

It localises to the nucleus. Its subcellular location is the cytoplasm. Transcription factor involved in osteoblastic differentiation and skeletal morphogenesis. Essential for the maturation of osteoblasts and both intramembranous and endochondral ossification. CBF binds to the core site, 5'-PYGPYGGT-3', of a number of enhancers and promoters, including murine leukemia virus, polyomavirus enhancer, T-cell receptor enhancers, osteocalcin, osteopontin, bone sialoprotein, alpha 1(I) collagen, LCK, IL-3 and GM-CSF promoters. Inhibits KAT6B-dependent transcriptional activation. In osteoblasts, supports transcription activation: synergizes with SPEN/MINT to enhance FGFR2-mediated activation of the osteocalcin FGF-responsive element (OCFRE). The sequence is that of Runt-related transcription factor 2 (RUNX2) from Equus caballus (Horse).